The sequence spans 85 residues: Toxin BmKa3 (85 aa).

The signal sequence occupies residues 1–19; sequence MNYLVFFSLALLLMTGVES. The 63-residue stretch at 21–83 folds into the LCN-type CS-alpha/beta domain; it reads RDGYIADDKN…VPIRVPGKCN (63 aa). 4 disulfides stabilise this stretch: cysteine 31-cysteine 82, cysteine 35-cysteine 55, cysteine 41-cysteine 65, and cysteine 45-cysteine 67.

Belongs to the long (4 C-C) scorpion toxin superfamily. Sodium channel inhibitor family. Alpha subfamily. In terms of tissue distribution, expressed by the venom gland.

The protein resides in the secreted. Functionally, alpha toxins bind voltage-independently at site-3 of sodium channels (Nav) and inhibit the inactivation of the activated channels, thereby blocking neuronal transmission. This chain is Toxin BmKa3, found in Olivierus martensii (Manchurian scorpion).